Consider the following 323-residue polypeptide: Viral cathepsin (323 aa).

A signal peptide spans 1 to 18 (MSKFLLYWFVYGVVCSAA). The propeptide at 19 to 112 (YDILKAPNYF…VVLDRPPGKG (94 aa)) is activation peptide. Cystine bridges form between cysteine 133–cysteine 174, cysteine 167–cysteine 207, and cysteine 262–cysteine 310. Residue cysteine 136 is part of the active site. N-linked (GlcNAc...) asparagine; by host glycosylation is present at asparagine 158. Catalysis depends on residues histidine 269 and asparagine 289.

Belongs to the peptidase C1 family. Post-translationally, synthesized as an inactive proenzyme and activated by proteolytic removal of the inhibitory propeptide.

The enzyme catalyses Endopeptidase of broad specificity, hydrolyzing substrates of both cathepsin L and cathepsin B.. Functionally, cysteine protease that plays an essential role in host liquefaction to facilitate horizontal transmission of the virus. May participate in the degradation of foreign protein expressed by the baculovirus system. The polypeptide is Viral cathepsin (VCATH) (Lepidoptera (butterflies and moths)).